A 492-amino-acid chain; its full sequence is MASADVFKANVEAVTRDYICEPRIEYRTVGGVSGPLVVVELVKRPKFAEIVNIRLGNGTSRRGQVLEVDGNRAVVQVFEGTSGIDNRNTTLQFTGEVLSTPVSKDMLGRVFNGSGKPIDGGPPVLAEAYLDIQGSSINPSERTYPEEMIQTGVSTIDVMNSIARGQKIPLFSAAGLPHNDIAAQICRQAGLVKRGNQDSMIDAGHEEEEFAIVFAAMGVNMETAHYFKQDFEENGSMEKTVLFLNLANDPTIERIITPRIALTTAEYLAYECGKHVLVILTDMSSYADALREVSAAREEVPGRRGYPGYMYTDLATIYERAGRIEGRKGSITQLPILTMPNDDITHPIPDLTGYITEGQIYVDRQLHNRQIYPPINVLPSLSRLMKSAIGEGMTRKDHSEVSNQLYANYAIGKDVAAMKAVVGEEALSSEDLLYLEFLDKFERKFVNQGHYEARTIFDSLDLAWTLLRLFPKELLRRITAKTLEKMYERSES.

It belongs to the ATPase alpha/beta chains family. V-ATPase is a heteromultimeric enzyme composed of a peripheral catalytic V1 complex (main components: subunits A, B, C, D, E, and F) attached to an integral membrane V0 proton pore complex (main component: the proteolipid protein).

Non-catalytic subunit of the peripheral V1 complex of vacuolar ATPase. V-ATPase is responsible for acidifying a variety of intracellular compartments in eukaryotic cells. This Acetabularia acetabulum (Mermaid's wine glass) protein is V-type proton ATPase subunit B 1.